We begin with the raw amino-acid sequence, 175 residues long: Mitochondrial inner membrane protease subunit 2 (175 aa).

The chain crosses the membrane as a helical span at residues 19 to 37 (FFVAVPVAVTFLDRVACVA). Catalysis depends on residues S43 and K91.

The protein belongs to the peptidase S26 family. IMP2 subfamily. As to quaternary structure, heterodimer of 2 subunits, IMMPL1 and IMMPL2. As to expression, expressed in all tissues tested except adult liver and lung.

It localises to the mitochondrion inner membrane. Its function is as follows. Catalyzes the removal of transit peptides required for the targeting of proteins from the mitochondrial matrix, across the inner membrane, into the inter-membrane space. Known to process the nuclear encoded protein DIABLO. The chain is Mitochondrial inner membrane protease subunit 2 (IMMP2L) from Homo sapiens (Human).